The chain runs to 570 residues: Sulfite reductase [NADPH] hemoprotein beta-component (570 aa).

[4Fe-4S] cluster contacts are provided by Cys434, Cys440, Cys479, and Cys483. Cys483 contacts siroheme.

The protein belongs to the nitrite and sulfite reductase 4Fe-4S domain family. Alpha(8)-beta(8). The alpha component is a flavoprotein, the beta component is a hemoprotein. The cofactor is siroheme. It depends on [4Fe-4S] cluster as a cofactor.

It carries out the reaction hydrogen sulfide + 3 NADP(+) + 3 H2O = sulfite + 3 NADPH + 4 H(+). It functions in the pathway sulfur metabolism; hydrogen sulfide biosynthesis; hydrogen sulfide from sulfite (NADPH route): step 1/1. Component of the sulfite reductase complex that catalyzes the 6-electron reduction of sulfite to sulfide. This is one of several activities required for the biosynthesis of L-cysteine from sulfate. The protein is Sulfite reductase [NADPH] hemoprotein beta-component of Shigella boydii serotype 4 (strain Sb227).